Here is a 522-residue protein sequence, read N- to C-terminus: Chromosomal replication initiator protein DnaA (522 aa).

Positions 1–71 (MQDFWHAASA…QSLACDYWEM (71 aa)) are domain I, interacts with DnaA modulators. The interval 71–185 (MQVDVQFVLD…PVDDTVHERS (115 aa)) is domain II. Residues 186–402 (RLNPILTFDN…GALRKILAYS (217 aa)) form a domain III, AAA+ region region. Glycine 230, glycine 232, lysine 233, and threonine 234 together coordinate ATP. The domain IV, binds dsDNA stretch occupies residues 403–522 (NFHGKEITIE…LHVLEQTLKG (120 aa)).

It belongs to the DnaA family. As to quaternary structure, oligomerizes as a right-handed, spiral filament on DNA at oriC.

The protein resides in the cytoplasm. Functionally, plays an essential role in the initiation and regulation of chromosomal replication. ATP-DnaA binds to the origin of replication (oriC) to initiate formation of the DNA replication initiation complex once per cell cycle. Binds the DnaA box (a 9 base pair repeat at the origin) and separates the double-stranded (ds)DNA. Forms a right-handed helical filament on oriC DNA; dsDNA binds to the exterior of the filament while single-stranded (ss)DNA is stabiized in the filament's interior. The ATP-DnaA-oriC complex binds and stabilizes one strand of the AT-rich DNA unwinding element (DUE), permitting loading of DNA polymerase. After initiation quickly degrades to an ADP-DnaA complex that is not apt for DNA replication. Binds acidic phospholipids. This Ralstonia nicotianae (strain ATCC BAA-1114 / GMI1000) (Ralstonia solanacearum) protein is Chromosomal replication initiator protein DnaA.